Here is a 275-residue protein sequence, read N- to C-terminus: Thiazole synthase (275 aa).

The active-site Schiff-base intermediate with DXP is the Lys116. 1-deoxy-D-xylulose 5-phosphate contacts are provided by residues Gly177, 203 to 204 (AG), and 225 to 226 (NT).

This sequence belongs to the ThiG family. In terms of assembly, homotetramer. Forms heterodimers with either ThiH or ThiS.

The protein localises to the cytoplasm. The enzyme catalyses [ThiS sulfur-carrier protein]-C-terminal-Gly-aminoethanethioate + 2-iminoacetate + 1-deoxy-D-xylulose 5-phosphate = [ThiS sulfur-carrier protein]-C-terminal Gly-Gly + 2-[(2R,5Z)-2-carboxy-4-methylthiazol-5(2H)-ylidene]ethyl phosphate + 2 H2O + H(+). It participates in cofactor biosynthesis; thiamine diphosphate biosynthesis. Functionally, catalyzes the rearrangement of 1-deoxy-D-xylulose 5-phosphate (DXP) to produce the thiazole phosphate moiety of thiamine. Sulfur is provided by the thiocarboxylate moiety of the carrier protein ThiS. In vitro, sulfur can be provided by H(2)S. The protein is Thiazole synthase of Acaryochloris marina (strain MBIC 11017).